The primary structure comprises 103 residues: Large ribosomal subunit protein bL21 (103 aa).

This sequence belongs to the bacterial ribosomal protein bL21 family. In terms of assembly, part of the 50S ribosomal subunit. Contacts protein L20.

Functionally, this protein binds to 23S rRNA in the presence of protein L20. This is Large ribosomal subunit protein bL21 from Albidiferax ferrireducens (strain ATCC BAA-621 / DSM 15236 / T118) (Rhodoferax ferrireducens).